Reading from the N-terminus, the 506-residue chain is MSQTTNSYDSFQDADLCSAAFAEKQDEKDKLTKLREDFYIPTKGDLINKKYGFQKSGNNAKGHENGKCIYFCGNSLGLQPTRTKEYINRYLDTWASKGVFGHFTDYEGGLPPWLHIDDAVKEQTSKIVGALPSEVVIMETLTANLHLLMSSFYRPTKDRWKIIIEGKAFPSDHYAALSQIAHHDLDPSALITIEPPSSSAPYLSNEHILSVISKHAATTALVLLPGIQFYSGQFFDIELITRHCRALGITVGWDLAHAVGNVPLKLHDWNVDFAAWCNYKYMSGGPGVIGGAFVHERHGTVGETAPTTTPDGTNGNPKTISDESLTYRPRLSGWWGNDKSSRFTMDNKFVPIPGASGYQLSNPSALDMTSVMASLDVFALTTMDALRERSIRLTGYLEARLLRYPGGEPPYTIITPTNPAERGAQLSVMLRPGMLDSVLHHLEKEGVVVDERKPDVLRIAPAPLYNTFRDVHDFIGIFHEACRKALVKPAEAPKHSEGVPKAIQTT.

Residues Leu-141, Thr-142, 169-172 (FPSD), Asp-254, His-257, and Tyr-279 contribute to the pyridoxal 5'-phosphate site. An N6-(pyridoxal phosphate)lysine modification is found at Lys-280. Low complexity predominate over residues 303 to 319 (ETAPTTTPDGTNGNPKT). A disordered region spans residues 303-322 (ETAPTTTPDGTNGNPKTISD). Pyridoxal 5'-phosphate contacts are provided by Trp-334 and Asn-362.

Belongs to the kynureninase family. In terms of assembly, homodimer. The cofactor is pyridoxal 5'-phosphate.

The protein resides in the cytoplasm. It carries out the reaction L-kynurenine + H2O = anthranilate + L-alanine + H(+). The catalysed reaction is 3-hydroxy-L-kynurenine + H2O = 3-hydroxyanthranilate + L-alanine + H(+). The protein operates within amino-acid degradation; L-kynurenine degradation; L-alanine and anthranilate from L-kynurenine: step 1/1. Its pathway is cofactor biosynthesis; NAD(+) biosynthesis; quinolinate from L-kynurenine: step 2/3. Its function is as follows. Catalyzes the cleavage of L-kynurenine (L-Kyn) and L-3-hydroxykynurenine (L-3OHKyn) into anthranilic acid (AA) and 3-hydroxyanthranilic acid (3-OHAA), respectively. This Phaeosphaeria nodorum (strain SN15 / ATCC MYA-4574 / FGSC 10173) (Glume blotch fungus) protein is Kynureninase 1.